Consider the following 249-residue polypeptide: Ribonuclease PH (249 aa).

Residues R90 and 128–130 (GTR) each bind phosphate.

This sequence belongs to the RNase PH family. Homohexameric ring arranged as a trimer of dimers.

The catalysed reaction is tRNA(n+1) + phosphate = tRNA(n) + a ribonucleoside 5'-diphosphate. In terms of biological role, phosphorolytic 3'-5' exoribonuclease that plays an important role in tRNA 3'-end maturation. Removes nucleotide residues following the 3'-CCA terminus of tRNAs; can also add nucleotides to the ends of RNA molecules by using nucleoside diphosphates as substrates, but this may not be physiologically important. Probably plays a role in initiation of 16S rRNA degradation (leading to ribosome degradation) during starvation. This is Ribonuclease PH from Parasynechococcus marenigrum (strain WH8102).